The following is a 528-amino-acid chain: Chaperonin GroEL, chloroplastic (528 aa).

ATP is bound by residues 29 to 32, 86 to 90, glycine 414, and aspartate 496; these read TLGP and DGTTT.

This sequence belongs to the chaperonin (HSP60) family. As to quaternary structure, forms a cylinder of 14 subunits composed of two heptameric rings stacked back-to-back. Interacts with the co-chaperonin GroES.

It localises to the plastid. The protein resides in the chloroplast. It catalyses the reaction ATP + H2O + a folded polypeptide = ADP + phosphate + an unfolded polypeptide.. Its function is as follows. Together with its co-chaperonin GroES, plays an essential role in assisting protein folding. The GroEL-GroES system forms a nano-cage that allows encapsulation of the non-native substrate proteins and provides a physical environment optimized to promote and accelerate protein folding. This chain is Chaperonin GroEL, chloroplastic, found in Gracilaria tenuistipitata var. liui (Red alga).